Here is a 181-residue protein sequence, read N- to C-terminus: Dehydration-responsive element-binding protein 1E (181 aa).

Positions 14 to 26 match the Nuclear localization signal motif; that stretch reads KKRAGRRIFKETR. The AP2/ERF DNA-binding region spans 29 to 86; the sequence is IYRGVRRRDGDKWVCEVREPIHQRRVWLGTYPTADMAARAHDVAVLALRGRSACLNFS.

Belongs to the AP2/ERF transcription factor family. ERF subfamily.

The protein resides in the nucleus. Transcriptional activator that binds specifically to the DNA sequence 5'-[AG]CCGAC-3'. Binding to the C-repeat/DRE element mediates cold or dehydration-inducible transcription. CBF/DREB1 factors play a key role in freezing tolerance and cold acclimation. In Arabidopsis thaliana (Mouse-ear cress), this protein is Dehydration-responsive element-binding protein 1E (DREB1E).